Consider the following 520-residue polypeptide: Amine oxidase [flavin-containing] B (520 aa).

The residue at position 2 (Ser2) is an N-acetylserine. The Cytoplasmic portion of the chain corresponds to 2–489; the sequence is SNKCDVIVVG…TFLERHLPSV (488 aa). An N6-acetyllysine modification is found at Lys52. S-8alpha-FAD cysteine is present on Cys397. A helical; Anchor for type IV membrane protein membrane pass occupies residues 490-516; the sequence is PGLLKLLGLTTILSATALGFLAHKKGL. Residues 517–520 lie on the Mitochondrial intermembrane side of the membrane; it reads FVRF.

This sequence belongs to the flavin monoamine oxidase family. As to quaternary structure, monomer, homo- or heterodimer (containing two subunits of similar size). Each subunit contains a covalently bound flavin. Enzymatically active as monomer. It depends on FAD as a cofactor.

The protein resides in the mitochondrion outer membrane. It carries out the reaction a secondary aliphatic amine + O2 + H2O = a primary amine + an aldehyde + H2O2. It catalyses the reaction (R)-adrenaline + O2 + H2O = (R)-3,4-dihydroxymandelaldehyde + methylamine + H2O2. The enzyme catalyses a primary methyl amine + O2 + H2O = an aldehyde + H2O2 + NH4(+). The catalysed reaction is dopamine + O2 + H2O = 3,4-dihydroxyphenylacetaldehyde + H2O2 + NH4(+). It carries out the reaction tyramine + O2 + H2O = (4-hydroxyphenyl)acetaldehyde + H2O2 + NH4(+). It catalyses the reaction (R)-noradrenaline + O2 + H2O = (R)-3,4-dihydroxymandelaldehyde + H2O2 + NH4(+). The enzyme catalyses benzylamine + O2 + H2O = benzaldehyde + H2O2 + NH4(+). The catalysed reaction is 2-phenylethylamine + O2 + H2O = 2-phenylacetaldehyde + H2O2 + NH4(+). It carries out the reaction N-acetylputrescine + O2 + H2O = 4-acetamidobutanal + H2O2 + NH4(+). Functionally, catalyzes the oxidative deamination of primary and some secondary amines such as neurotransmitters, and exogenous amines including the tertiary amine, neurotoxin 1-methyl-4-phenyl-1,2,3,6-tetrahydropyridine (MPTP), with concomitant reduction of oxygen to hydrogen peroxide and participates in the metabolism of neuroactive and vasoactive amines in the central nervous system and peripheral tissues. Preferentially degrades benzylamine and phenylethylamine. In Rattus norvegicus (Rat), this protein is Amine oxidase [flavin-containing] B.